The chain runs to 185 residues: Transcription termination/antitermination protein NusG (185 aa).

In terms of domain architecture, KOW spans 134 to 162; sequence PGQMVRVIDGPFNDFDGLVEEVNYEKNRL.

This sequence belongs to the NusG family.

Its function is as follows. Participates in transcription elongation, termination and antitermination. This is Transcription termination/antitermination protein NusG from Xylella fastidiosa (strain 9a5c).